The sequence spans 179 residues: Cytochrome b6-f complex iron-sulfur subunit (179 aa).

A helical membrane pass occupies residues 21–43 (LLTFGTVTGVALGALYPVVNYFI). The 102-residue stretch at 61 to 162 (GNDVSVTKFL…TNVSDDKIVL (102 aa)) folds into the Rieske domain. [2Fe-2S] cluster-binding residues include C108, H110, C126, and H129. C113 and C128 are oxidised to a cystine.

Belongs to the Rieske iron-sulfur protein family. The 4 large subunits of the cytochrome b6-f complex are cytochrome b6, subunit IV (17 kDa polypeptide, PetD), cytochrome f and the Rieske protein, while the 4 small subunits are PetG, PetL, PetM and PetN. The complex functions as a dimer. The cofactor is [2Fe-2S] cluster.

Its subcellular location is the cellular thylakoid membrane. The catalysed reaction is 2 oxidized [plastocyanin] + a plastoquinol + 2 H(+)(in) = 2 reduced [plastocyanin] + a plastoquinone + 4 H(+)(out). Component of the cytochrome b6-f complex, which mediates electron transfer between photosystem II (PSII) and photosystem I (PSI), cyclic electron flow around PSI, and state transitions. The polypeptide is Cytochrome b6-f complex iron-sulfur subunit (Nostoc punctiforme (strain ATCC 29133 / PCC 73102)).